The primary structure comprises 190 residues: Xanthine phosphoribosyltransferase (190 aa).

Xanthine contacts are provided by Leu20 and Asn27. Residue 128–132 (ANGKA) participates in 5-phospho-alpha-D-ribose 1-diphosphate binding. Lys156 lines the xanthine pocket.

This sequence belongs to the purine/pyrimidine phosphoribosyltransferase family. Xpt subfamily. As to quaternary structure, homodimer.

It is found in the cytoplasm. It carries out the reaction XMP + diphosphate = xanthine + 5-phospho-alpha-D-ribose 1-diphosphate. It participates in purine metabolism; XMP biosynthesis via salvage pathway; XMP from xanthine: step 1/1. In terms of biological role, converts the preformed base xanthine, a product of nucleic acid breakdown, to xanthosine 5'-monophosphate (XMP), so it can be reused for RNA or DNA synthesis. This chain is Xanthine phosphoribosyltransferase, found in Pseudomonas fluorescens (strain SBW25).